Consider the following 356-residue polypeptide: Carbohydrate sulfotransferase 10 (356 aa).

The Cytoplasmic portion of the chain corresponds to 1-6 (MHHQWL). Residues 7-27 (LLAACFWVIFMFMVASKFITL) form a helical; Signal-anchor for type II membrane protein membrane-spanning segment. At 28-356 (TFKDPDVYSA…GYQKPDFLLN (329 aa)) the chain is on the lumenal side. Residue Asn99 is glycosylated (N-linked (GlcNAc...) asparagine). 3'-phosphoadenylyl sulfate-binding positions include 127–133 (PKVGNTQ) and 189–197 (RDPFERLIS). Asn228 and Asn316 each carry an N-linked (GlcNAc...) asparagine glycan.

Belongs to the sulfotransferase 2 family.

It is found in the golgi apparatus membrane. The catalysed reaction is 3-O-{beta-D-GlcA-(1-&gt;[3)-alpha-D-Xyl-(1-&gt;3)-beta-D-GlcA-(1-&gt;](n)-4)-beta-D-Xyl-(1-&gt;4)-Rib-ol-P-Rib-ol-P-3-beta-D-GalNAc-(1-&gt;3)-beta-D-GlcNAc-(1-&gt;4)-O-6-P-alpha-D-Man}-L-Thr-[protein] + 3'-phosphoadenylyl sulfate = 3-O-{O-3-S-beta-D-GlcA-(1-&gt;[3)-alpha-D-Xyl-(1-&gt;3)-beta-D-GlcA-(1-&gt;](n)-4)-beta-D-Xyl-(1-&gt;4)-Rib-ol-P-Rib-ol-P-3-beta-D-GalNAc-(1-&gt;3)-beta-D-GlcNAc-(1-&gt;4)-O-6-P-alpha-D-Man}-L-Thr-[protein] + adenosine 3',5'-bisphosphate + H(+). It catalyses the reaction 17beta-estradiol 3-O-(beta-D-glucuronate) + 3'-phosphoadenylyl sulfate = 17beta-estradiol 3-O-(3-sulfo-beta-D-glucuronate) + adenosine 3',5'-bisphosphate + H(+). The enzyme catalyses 17beta-estradiol 3-O-(beta-D-glucuronate) 17-sulfate + 3'-phosphoadenylyl sulfate = 17beta-estradiol 3-O-(3-sulfo-beta-D-glucuronate) 17-sulfate + adenosine 3',5'-bisphosphate + H(+). It carries out the reaction 17beta-estradiol 17-O-(beta-D-glucuronate) + 3'-phosphoadenylyl sulfate = 17beta-estradiol 17-O-(3-sulfo-beta-D-glucuronate) + adenosine 3',5'-bisphosphate + H(+). The catalysed reaction is 16alpha,17beta-estriol 3-O-(beta-D-glucuronate) + 3'-phosphoadenylyl sulfate = 16alpha,17beta-estriol 3-O-(3-sulfo-beta-D-glucuronate) + adenosine 3',5'-bisphosphate + H(+). It catalyses the reaction 16alpha,17beta-estriol 16-O-(beta-D-glucuronate) + 3'-phosphoadenylyl sulfate = 16alpha,17beta-estriol 16-O-(3-sulfo-beta-D-glucuronate) + adenosine 3',5'-bisphosphate + H(+). The enzyme catalyses 16alpha,17beta-estriol 17-O-(beta-D-glucuronate) + 3'-phosphoadenylyl sulfate = 16alpha,17beta-estriol 17-O-(3-sulfo-beta-D-glucuronate) + adenosine 3',5'-bisphosphate + H(+). It carries out the reaction estrone 3-O-(beta-D-glucuronate) + 3'-phosphoadenylyl sulfate = estrone 3-O-(3-sulfo-beta-D-glucuronate) + adenosine 3',5'-bisphosphate + H(+). The catalysed reaction is 3alpha,20alpha-dihydroxy-5beta-pregnane 3-O-(beta-D-glucuronate) + 3'-phosphoadenylyl sulfate = 3alpha,20alpha-dihydroxy-5beta-pregnane 3-O-(3-sulfo-beta-D-glucuronate) + adenosine 3',5'-bisphosphate + H(+). It catalyses the reaction testosterone 17-O-(beta-D-glucuronate) + 3'-phosphoadenylyl sulfate = testosterone 17-O-(3-sulfo-beta-D-glucuronate) + adenosine 3',5'-bisphosphate + H(+). The enzyme catalyses 3beta-androst-5-en-17-one 3-O-(beta-D-glucuronate) + 3'-phosphoadenylyl sulfate = 3beta-androst-5-en-17-one 3-O-(3-sulfo-beta-D-glucuronate) + adenosine 3',5'-bisphosphate + H(+). It carries out the reaction 3alpha,17alpha-dihydroxy-5beta-androstane-11-one-17beta-carboxylate 3-O-(beta-D-glucuronate) + 3'-phosphoadenylyl sulfate = 3alpha,17alpha-dihydroxy-5beta-androstane-11-one-17beta-carboxylate 3-O-(3-sulfo-beta-D-glucuronate) + adenosine 3',5'-bisphosphate + H(+). The catalysed reaction is 3alpha-hydroxyetiocholan-17-one 3-O-(beta-D-glucuronate) + 3'-phosphoadenylyl sulfate = 3alpha-hydroxyetiocholan-17-one 3-O-(3-sulfo-beta-D-glucuronate) + adenosine 3',5'-bisphosphate + H(+). It functions in the pathway steroid metabolism. Its pathway is protein modification; carbohydrate sulfation. Its function is as follows. Catalyzes the transfer of sulfate from 3'-phosphoadenylyl sulfate (PAPS) to position 3 of terminal glucuronic acid of both protein- and lipid-linked oligosaccharides. Participates in biosynthesis of HNK-1 carbohydrate structure 3-O-sulfo-beta-D-GlcA-(1-&gt;3)-beta-D-Gal-(1-&gt;4)-D-GlcNAc-R, a sulfated glucuronyl-lactosaminyl residue carried by many neural recognition molecules, which is involved in cell interactions during ontogenetic development and in synaptic plasticity in the adult. May be indirectly involved in synapse plasticity of the hippocampus, via its role in HNK-1 biosynthesis. Sulfates terminal glucuronyl residue of the laminin globular (LG)-domain binding epitope on DAG1/alpha-dystroglycan and prevents further polymerization by LARGE1 glycosyltransferase. Likely defines the chain length of LG epitope, conferring binding specificity to extracellular matrix components. Plays a role in down-regulating the steroid hormones. Sulfates glucuronidated estrogens and androgens with an impact in hormone cycle and fertility. Has a preference for glucuronyl moiety at the 3-hydroxyl group of a sterol ring rather than the 17-hydroxyl group, showing high catalytic efficiency for 17beta-estradiol 3-O-(beta-D-glucuronate) and dehydroepiandrosterone 3-O-(beta-D-glucuronate) hormones. This Pongo abelii (Sumatran orangutan) protein is Carbohydrate sulfotransferase 10 (CHST10).